Reading from the N-terminus, the 34-residue chain is DDIT3 upstream open reading frame protein (34 aa).

As to quaternary structure, interacts with DDIT3 (isoform 1).

It is found in the nucleus. The protein localises to the cytoplasm. Product of the upstream open reading frame (uORF) of DDIT3/CHOP that is specifically produced in absence of stress, thereby preventing translation of downstream stress effector DDIT3/CHOP. This is DDIT3 upstream open reading frame protein from Mus musculus (Mouse).